A 153-amino-acid polypeptide reads, in one-letter code: MIKVGICDTTFARYDMGGAAIDELKKHTAGIKIIRRTVPGIKDLPVACKKLIEEEGCEMVMALGMPGPEEKDKVCAHEASTGLIQAQLMTNTHILEVFVHEDEEDDPEELKVLADNRAREHAQNLIMMLFKPDRLTREAGMGLREGKPDAGPL.

It belongs to the DMRL synthase family. Homooligomer. Requires Mg(2+) as cofactor.

It carries out the reaction 2 6,7-dimethyl-8-(1-D-ribityl)lumazine + H(+) = 5-amino-6-(D-ribitylamino)uracil + riboflavin. Its pathway is cofactor biosynthesis; riboflavin biosynthesis; riboflavin from 2-hydroxy-3-oxobutyl phosphate and 5-amino-6-(D-ribitylamino)uracil: step 2/2. Inhibited by EDTA. In Methanothermobacter thermautotrophicus (strain ATCC 29096 / DSM 1053 / JCM 10044 / NBRC 100330 / Delta H) (Methanobacterium thermoautotrophicum), this protein is Riboflavin synthase (ribC).